A 501-amino-acid polypeptide reads, in one-letter code: Myosin heavy chain, embryonic smooth muscle isoform (501 aa).

Residues 1–457 (REAREKETKA…TLKNRLRRGG (457 aa)) are a coiled coil. A rodlike tail (S2 and LMM domains) region spans residues 1-501 (REAREKETKA…VNETQPPQSE (501 aa)). 3 disordered regions span residues 182-202 (YQRELEEARGSRDEIFAQSKE), 221-254 (LASSERARRHAEQERDELADEIANSASGKSALLD), and 397-501 (MEKA…PQSE). Basic and acidic residues predominate over residues 223–233 (SSERARRHAEQ). The span at 492–501 (VNETQPPQSE) shows a compositional bias: polar residues.

As to quaternary structure, muscle myosin is a hexameric protein that consists of 2 heavy chain subunits (MHC), 2 alkali light chain subunits (MLC) and 2 regulatory light chain subunits (MLC-2).

The protein localises to the cytoplasm. Its subcellular location is the myofibril. Functionally, muscle contraction. This chain is Myosin heavy chain, embryonic smooth muscle isoform, found in Oryctolagus cuniculus (Rabbit).